We begin with the raw amino-acid sequence, 86 residues long: Progonadoliberin-2 (86 aa).

The first 24 residues, 1 to 24 (MVHICRLLVLMGMLLCLSAQFASS), serve as a signal peptide directing secretion. Gln25 bears the Pyrrolidone carboxylic acid mark. Gly34 is modified (glycine amide).

This sequence belongs to the GnRH family.

Its subcellular location is the secreted. Functionally, stimulates the secretion of gonadotropins. The sequence is that of Progonadoliberin-2 (gnrh2) from Rutilus rutilus (Roach).